Here is a 119-residue protein sequence, read N- to C-terminus: Beta-2-microglobulin (119 aa).

An N-terminal signal peptide occupies residues 1-20; the sequence is MARTVATFFLMLVSLACLDA. The Ig-like C1-type domain occupies 25–114; the sequence is PQVQVYTRHP…VTLKEPKVVT (90 aa). A disulfide bridge connects residues C45 and C100.

This sequence belongs to the beta-2-microglobulin family. As to quaternary structure, heterodimer of an alpha chain and a beta chain. Beta-2-microglobulin is the beta-chain of major histocompatibility complex class I molecules.

It localises to the secreted. Functionally, component of the class I major histocompatibility complex (MHC). Involved in the presentation of peptide antigens to the immune system. This Sigmodon hispidus (Hispid cotton rat) protein is Beta-2-microglobulin (B2M).